Here is an 86-residue protein sequence, read N- to C-terminus: Large ribosomal subunit protein bL31B (86 aa).

It belongs to the bacterial ribosomal protein bL31 family. Type B subfamily. In terms of assembly, part of the 50S ribosomal subunit.

This is Large ribosomal subunit protein bL31B from Cupriavidus metallidurans (strain ATCC 43123 / DSM 2839 / NBRC 102507 / CH34) (Ralstonia metallidurans).